Reading from the N-terminus, the 223-residue chain is MSIFDRLSRLLRANVNDMISKAEDPAKIIDQALRDMRSAYADARNEVAGAMAQAAKLEREAGTNSKLAAEYEKKAEEALRGGSEDLAREALRRAQNHKDLAKGFDEQRTVQQSTVDQLKTQLRALEAKIDEMESKKTLLAARQKTAQAGETLDRVSGFSKAGGAMDAFNEMEQKVAGMEDRNKAMGELRNDQDFDAQLKDLGRDKDVDDALAALKAKVQSSNQ.

The stretch at 29-185 (IDQALRDMRS…AGMEDRNKAM (157 aa)) forms a coiled coil.

It belongs to the PspA/Vipp/IM30 family.

This Deinococcus radiodurans (strain ATCC 13939 / DSM 20539 / JCM 16871 / CCUG 27074 / LMG 4051 / NBRC 15346 / NCIMB 9279 / VKM B-1422 / R1) protein is Phage shock protein A homolog.